Reading from the N-terminus, the 526-residue chain is Amino acid transporter heavy chain SLC3A2 (526 aa).

Residues 1-31 form a disordered region; sequence MSQDTEVDMKDVELNELEPEKQPMNAADGAA. The Cytoplasmic segment spans residues 1–75; it reads MSQDTEVDMK…AGSPGWVRTR (75 aa). Residue Ser-2 is modified to Phosphoserine. A Phosphothreonine modification is found at Thr-5. The segment covering 7 to 21 has biased composition (basic and acidic residues); the sequence is VDMKDVELNELEPEK. Residue Lys-42 forms a Glycyl lysine isopeptide (Lys-Gly) (interchain with G-Cter in ubiquitin) linkage. Ser-58 carries the phosphoserine modification. Lys-59 participates in a covalent cross-link: Glycyl lysine isopeptide (Lys-Gly) (interchain with G-Cter in SUMO2). A helical; Signal-anchor for type II membrane protein membrane pass occupies residues 76–99; sequence WALLLLFWLGWLGMLAGAVVIIVR. Residues 100–526 lie on the Extracellular side of the membrane; sequence APRCRELPVQ…GLLLQFPFVA (427 aa). Residues Asn-166, Asn-259, and Asn-263 are each glycosylated (N-linked (GlcNAc...) asparagine). Ser-300 bears the Phosphoserine mark. Asn-301 carries N-linked (GlcNAc...) asparagine glycosylation. Residue Ser-302 is modified to Phosphoserine. Residues Asn-318, Asn-385, and Asn-399 are each glycosylated (N-linked (GlcNAc...) asparagine). At Ser-420 the chain carries Phosphoserine. A glycan (N-linked (GlcNAc...) asparagine) is linked at Asn-509.

It belongs to the SLC3A transporter family. In terms of assembly, disulfide-linked heterodimer with a non-glycosylated light chain (SLC7A5, SLC7A6, SLC7A7, SLC7A8, SLC7A10 or SLC7A11). Interacts with TLCD3A/CT120 and ICAM1. Constitutively and specifically associates with beta-1 integrins (alpha-2/beta-1, alpha-3/beta-1, alpha-5/beta-1 and alpha-6/beta-1), but minimally with alpha-4/beta-1. Interacts with LAPTM4B; recruits SLC3A2 and SLC7A5 to lysosomes to promote leucine uptake into these organelles and is required for mTORC1 activation. Post-translationally, phosphorylation on Ser-300 or Ser-302 and on Ser-420 by ecto-protein kinases favors heterotypic cell-cell interactions. In terms of processing, N-glycosylated; N-glycosylation is crucial for trafficking and stability of SLC3A2 to the plasma membrane. Detected on the surface of embryonic epithelial cells in the epidermis, thymus, kidney, intestine, brain choroid plexus, and in retina. Detected in adult and embryonic brain, spleen, kidney, intestine and liver, and in adult testis (at protein level). Observed in all adult tissues tested with strongest expression in kidney, small intestine, spleen, thymus and liver. Moderate expression in brain, stomach, heart, testis, lung, skin, pancreas and skeletal muscle. In brain expressed on capillary endothelia in cerebral cortex.

The protein resides in the apical cell membrane. It localises to the cell membrane. It is found in the cell junction. The protein localises to the lysosome membrane. Its subcellular location is the melanosome. The protein resides in the basolateral cell membrane. Functionally, acts as a chaperone that facilitates biogenesis and trafficking of functional transporters heterodimers to the plasma membrane. Forms heterodimer with SLC7 family transporters (SLC7A5, SLC7A6, SLC7A7, SLC7A8, SLC7A10 and SLC7A11), a group of amino-acid antiporters. Heterodimers function as amino acids exchangers, the specificity of the substrate depending on the SLC7A subunit. Heterodimers SLC3A2/SLC7A6 or SLC3A2/SLC7A7 mediate the uptake of dibasic amino acids. Heterodimer SLC3A2/SLC7A11 functions as an antiporter by mediating the exchange of extracellular anionic L-cystine and intracellular L-glutamate across the cellular plasma membrane. SLC3A2/SLC7A10 translocates small neutral L- and D-amino acids across the plasma membrane. SLC3A2/SLC75 or SLC3A2/SLC7A8 translocates neutral amino acids with broad specificity, thyroid hormones and L-DOPA. SLC3A2 is essential for plasma membrane localization, stability, and the transport activity of SLC7A5 and SLC7A8. When associated with LAPTM4B, the heterodimer SLC7A5 is recruited to lysosomes to promote leucine uptake into these organelles, and thereby mediates mTORC1 activation. Modulates integrin-related signaling and is essential for integrin-dependent cell spreading, migration and tumor progression. The sequence is that of Amino acid transporter heavy chain SLC3A2 from Mus musculus (Mouse).